A 509-amino-acid chain; its full sequence is E3 ubiquitin-protein ligase RAD18 (509 aa).

An N-acetylmethionine modification is found at Met1. The segment at 25–64 (CGICFEYFNIAVIIPQCSHNYCSLCIRKFLSYKTQCPTCC) adopts an RING-type zinc-finger fold. Ser99, Ser103, Ser158, and Ser164 each carry phosphoserine. Residues 201–228 (KVSCPVCGVSIPENHINKHLDSCLSREE) form a UBZ4-type zinc finger. Zn(2+)-binding residues include Cys204, Cys207, His219, and Cys223. The LR motif signature appears at 232-240 (SLRSSAHKR). Residues 248–282 (YNLLSDRDLKKKLKQYGLSVQGNKQQLIKRHQEFV) enclose the SAP domain. Disordered stretches follow at residues 365–401 (GRVSQAAAMRTDEPAETLPSMRTDEPAETLPSMRTDE) and 435–509 (VSVT…RNKN). Polar residues-rich tracts occupy residues 435–446 (VSVTNHFPQPQL) and 463–473 (CTDILFSSDSD). Ser485 is subject to Phosphoserine. Basic and acidic residues predominate over residues 493 to 509 (RASECVEIEPRNKRNKN).

This sequence belongs to the RAD18 family. In terms of assembly, homodimer. Interacts with UBE2A and UBE2B, one homodimer binding one molecule of UBE2B. Interacts with HLTF. Interacts with SHPRH. Interacts with SPRTN; leading to enhance chromatin association of RAD18 and RAD18-mediated PCNA ubiquitination and translesion DNA synthesis. Interacts (via C-terminus and phosphorylated form) with SLF1 (via BRCT domains); this interaction is required for efficient repair of UV-induced DNA damage. Interacts with SLF2. Interacts with SMC5; this interaction is increased in a SLF1 or SLF2-dependent manner. As to expression, expressed in thymus, spleen, brain, and ovary.

It localises to the nucleus. The protein resides in the cytoplasm. The protein localises to the cytoskeleton. Its subcellular location is the microtubule organizing center. It is found in the centrosome. It catalyses the reaction S-ubiquitinyl-[E2 ubiquitin-conjugating enzyme]-L-cysteine + [acceptor protein]-L-lysine = [E2 ubiquitin-conjugating enzyme]-L-cysteine + N(6)-ubiquitinyl-[acceptor protein]-L-lysine.. The protein operates within protein modification; protein ubiquitination. Its function is as follows. E3 ubiquitin-protein ligase involved in postreplication repair of UV-damaged DNA. Postreplication repair functions in gap-filling of a daughter strand on replication of damaged DNA. Associates to the E2 ubiquitin conjugating enzyme UBE2B to form the UBE2B-RAD18 ubiquitin ligase complex involved in mono-ubiquitination of DNA-associated PCNA on 'Lys-164'. Has ssDNA binding activity. This chain is E3 ubiquitin-protein ligase RAD18 (Rad18), found in Mus musculus (Mouse).